The chain runs to 337 residues: MEEEKLTSEKEIYDITVIGGGPVGLFTAFYAGLRGISVKVIESLSELGGQPAILYPEKVIYDIPAFPAITGADLVDNLIEQLERFKDKTTICLKEEVKTFEKENAIFTITTNKGNHFSKAIIIACGNGAFAPRRLGLDDEERYADHNLFYNVHKLDQFAGKKVVICGGGDSAVDWANALDKIAESVTLVHRRDAFRAHEHSVEVLKTSHVNIMTPYVPLELKGEGDEATSLVIQKVKSEETKELSLDSLIVSFGFSTSNKNLKSWNIDYKRSSINVSPLFETSQTGVFAIGDAAEYEGKIDLIATGFGEAPTAVNQAIKYIYPERDNRVVHSTSLIK.

FAD-binding residues include Glu42, Gln50, Tyr55, Val97, Phe130, Asp292, and Thr333.

The protein belongs to the ferredoxin--NADP reductase type 2 family. Homodimer. It depends on FAD as a cofactor.

The catalysed reaction is 2 reduced [2Fe-2S]-[ferredoxin] + NADP(+) + H(+) = 2 oxidized [2Fe-2S]-[ferredoxin] + NADPH. This chain is Ferredoxin--NADP reductase, found in Streptococcus mutans serotype c (strain ATCC 700610 / UA159).